The following is a 175-amino-acid chain: Alkyl hydroperoxide reductase AhpD (175 aa).

The active-site Proton donor is Cys131. Cys131 and Cys134 form a disulfide bridge. Cys134 serves as the catalytic Cysteine sulfenic acid (-SOH) intermediate.

The protein belongs to the AhpD family.

It carries out the reaction N(6)-[(R)-dihydrolipoyl]-L-lysyl-[lipoyl-carrier protein] + a hydroperoxide = N(6)-[(R)-lipoyl]-L-lysyl-[lipoyl-carrier protein] + an alcohol + H2O. Functionally, antioxidant protein with alkyl hydroperoxidase activity. Required for the reduction of the AhpC active site cysteine residues and for the regeneration of the AhpC enzyme activity. In Brucella canis (strain ATCC 23365 / NCTC 10854 / RM-666), this protein is Alkyl hydroperoxide reductase AhpD.